The following is a 688-amino-acid chain: Transcription factor GTE9 (688 aa).

A disordered region spans residues 1-36 (MTERNGGFPGDYCFEAPGGDYDEGSDSPRVSEGSNC). Positions 132–238 (TAVMLLMKQC…KFFEVRWKTL (107 aa)) constitute a Bromo domain. Residues 280–361 (ENVVDPAKRV…EHLREIQNKK (82 aa)) form the NET domain. The interval 423-505 (GNSLGSVSGD…AQNEKQLPPE (83 aa)) is disordered. A Phosphoserine modification is found at S478. The span at 491–500 (QDGNSAQNEK) shows a compositional bias: polar residues. The tract at residues 505–688 (EKSYRAAILK…EIDIEEGEID (184 aa)) is transcription activation domain. Residues 534–613 (TRDPEKLQRE…QSVELNENAK (80 aa)) adopt a coiled-coil conformation. Residues 660–688 (FMKQDEDEEEADPLTSPAPEIDIEEGEID) form a disordered region.

Interacts with BT1.

The protein resides in the nucleus. This chain is Transcription factor GTE9 (GTE9), found in Arabidopsis thaliana (Mouse-ear cress).